Reading from the N-terminus, the 192-residue chain is Adenylate kinase (192 aa).

Residue 12-17 participates in ATP binding; that stretch reads GSGKTT. The interval 34–63 is NMP; it reads STGDLLRAEVASGSELGKTIDSFISKGNLV. AMP contacts are provided by residues threonine 35, arginine 40, 61–63, 88–91, and glutamine 95; these read NLV and GYPR. Residues 130 to 136 are LID; that stretch reads GRNRGAD. Arginine 131 serves as a coordination point for ATP. Residues arginine 133 and arginine 145 each coordinate AMP. Arginine 173 serves as a coordination point for ATP.

The protein belongs to the adenylate kinase family. As to quaternary structure, monomer.

The protein localises to the cytoplasm. It catalyses the reaction AMP + ATP = 2 ADP. The protein operates within purine metabolism; AMP biosynthesis via salvage pathway; AMP from ADP: step 1/1. In terms of biological role, catalyzes the reversible transfer of the terminal phosphate group between ATP and AMP. Plays an important role in cellular energy homeostasis and in adenine nucleotide metabolism. The chain is Adenylate kinase from Campylobacter jejuni subsp. jejuni serotype O:6 (strain 81116 / NCTC 11828).